The chain runs to 452 residues: La-related protein 1B (452 aa).

The segment covering 1 to 22 has biased composition (low complexity); sequence MATTASSAANSASRFSIDSSIS. Residues 1–251 are disordered; sequence MATTASSAAN…GFSHRNYSGR (251 aa). Ala2 carries the N-acetylalanine modification. Over residues 44–68 the composition is skewed to polar residues; it reads LSLSQDDPFSAPSVSPPTGNNSSDY. 4 stretches are compositionally biased toward low complexity: residues 99 to 117, 136 to 163, 171 to 185, and 206 to 223; these read SWPALSLSARSSSIKSPSL, ATSNTSTNANAGSSVSATSSENSAVNNS, NNNTSSSSTSSNVSN, and SGNFRNSQRNRNSSSYPR. The span at 225 to 236 shows a compositional bias: basic and acidic residues; that stretch reads EGLHHGNRRNYE. Residues 237 to 247 are compositionally biased toward polar residues; it reads HGNQSGFSHRN. One can recognise an HTH La-type RNA-binding domain in the interval 328 to 417; sequence RNFDAILYNK…RGDWDKYLLP (90 aa). The disordered stretch occupies residues 419–452; that stretch reads EPSRSGPAAGASNNASLVSQIESMTLSERSREGV. The segment covering 422–434 has biased composition (low complexity); that stretch reads RSGPAAGASNNAS. The segment covering 435–445 has biased composition (polar residues); it reads LVSQIESMTLS.

Belongs to the LARP family.

It is found in the cytoplasm. Its function is as follows. Promotes leaf senescence. This chain is La-related protein 1B (LARP1B), found in Arabidopsis thaliana (Mouse-ear cress).